Reading from the N-terminus, the 141-residue chain is Endoribonuclease YbeY (141 aa).

Zn(2+) contacts are provided by H107, H111, and H117.

Belongs to the endoribonuclease YbeY family. Requires Zn(2+) as cofactor.

The protein resides in the cytoplasm. In terms of biological role, single strand-specific metallo-endoribonuclease involved in late-stage 70S ribosome quality control and in maturation of the 3' terminus of the 16S rRNA. In Leptospira interrogans serogroup Icterohaemorrhagiae serovar Lai (strain 56601), this protein is Endoribonuclease YbeY.